Reading from the N-terminus, the 383-residue chain is Phosphoenolpyruvate/phosphate translocator 2, chloroplastic (383 aa).

The N-terminal 55 residues, 1–55 (MFALTFLNPNPRLPSPLFLAKSTPESALSRRSRAFSSSNSYPWRPNLRFNGFKLK), are a transit peptide targeting the chloroplast. Transmembrane regions (helical) follow at residues 76 to 96 (GLKL…YNIF), 108 to 128 (ATVT…MWLL), 143 to 163 (VIVQ…VSLG), 179 to 199 (FFTV…WIVC), 210 to 232 (LASF…SNVT), 253 to 273 (INLF…LAIL), 299 to 319 (IMSL…YMIL), and 350 to 369 (VSPL…YLYS). Residues 93–212 (YNIFNKQVLR…PIVAGVSLAS (120 aa)) enclose the EamA domain.

Belongs to the TPT transporter family. PPT (TC 2.A.7.9) subfamily. Widely expressed in leaves throughout development. In flowers, expressed in sepals and pistils.

The protein localises to the plastid. It localises to the chloroplast membrane. In terms of biological role, phosphoenolpyruvate/phosphate translocator that transports phosphoenolpyruvate (PEP), 2-phosphoglycerate and 3-phosphoglycerate. This is Phosphoenolpyruvate/phosphate translocator 2, chloroplastic (PPT2) from Arabidopsis thaliana (Mouse-ear cress).